The sequence spans 512 residues: uncharacterized protein (512 aa).

The next 2 membrane-spanning stretches (helical) occupy residues 20–40 (IFPVFMVMIIGLISFYAIYIW) and 222–242 (GIALLVVMGVVLILLVIFGYI). In terms of domain architecture, Histidine kinase spans 297–512 (EQLIQSIEQT…TLMCYQIPLV (216 aa)). His-325 bears the Phosphohistidine; by autocatalysis mark.

Post-translationally, autophosphorylated.

Its subcellular location is the cell membrane. It catalyses the reaction ATP + protein L-histidine = ADP + protein N-phospho-L-histidine.. Functionally, probable member of the two-component regulatory system SE_0166/SE_0165. May activate SE_0165 by phosphorylation. This is an uncharacterized protein from Staphylococcus epidermidis (strain ATCC 12228 / FDA PCI 1200).